Here is a 331-residue protein sequence, read N- to C-terminus: Glucokinase (331 aa).

ATP is bound at residue 16 to 21 (GDIGGT).

The protein belongs to the bacterial glucokinase family.

It is found in the cytoplasm. It carries out the reaction D-glucose + ATP = D-glucose 6-phosphate + ADP + H(+). The chain is Glucokinase from Pseudomonas aeruginosa (strain UCBPP-PA14).